The chain runs to 156 residues: Oxidized purine nucleoside triphosphate hydrolase (156 aa).

The region spanning 3 to 132 (TSRLYTLVLV…WFPLLLQKKK (130 aa)) is the Nudix hydrolase domain. Threonine 8 is a 2-oxo-dATP binding site. Lysine 23 contacts 8-oxo-dGTP. 2-oxo-dATP contacts are provided by residues asparagine 33 and 35–38 (FGGK). Mg(2+) contacts are provided by glycine 36, glutamate 52, glutamate 55, glutamate 56, and glutamate 100. The short motif at 37–58 (GKVQEGETIEDGAKRELREESG) is the Nudix box element. 117–120 (WPDD) provides a ligand contact to 2-oxo-dATP.

The protein belongs to the Nudix hydrolase family. Monomer. It depends on Mg(2+) as a cofactor.

The protein localises to the cytoplasm. It localises to the nucleus. The protein resides in the nucleus membrane. Its subcellular location is the cytoplasmic vesicle. It is found in the secretory vesicle. The protein localises to the acrosome. It catalyses the reaction 2-oxo-dATP + H2O = 2-oxo-dAMP + diphosphate + H(+). The catalysed reaction is 2-oxo-ATP + H2O = 2-oxo-AMP + diphosphate + H(+). It carries out the reaction 8-oxo-dGTP + H2O = 8-oxo-dGMP + diphosphate + H(+). The enzyme catalyses 8-oxo-dATP + H2O = 8-oxo-dAMP + diphosphate + H(+). It catalyses the reaction O(6)-methyl-dGTP + H2O = O(6)-methyl-dGMP + diphosphate + H(+). The catalysed reaction is N(6)-methyl-dATP + H2O = N(6)-methyl-dAMP + diphosphate + H(+). It carries out the reaction N(6)-methyl-ATP + H2O = N(6)-methyl-AMP + diphosphate + H(+). Functionally, oxidized purine nucleoside triphosphate hydrolase which is a prominent sanitizer of the oxidized nucleotide pool. Catalyzes the hydrolysis of 2-oxo-dATP (2-hydroxy-dATP) into 2-oxo-dAMP. Also has a significant hydrolase activity toward 2-oxo-ATP, 8-oxo-dGTP and 8-oxo-dATP. Through the hydrolysis of oxidized purine nucleoside triphosphates, prevents their incorporation into DNA and the subsequent transversions A:T to C:G and G:C to T:A. Also catalyzes the hydrolysis of methylated purine nucleoside triphosphate preventing their integration into DNA. Through this antimutagenic activity protects cells from oxidative stress. This chain is Oxidized purine nucleoside triphosphate hydrolase (NUDT1), found in Canis lupus familiaris (Dog).